A 459-amino-acid polypeptide reads, in one-letter code: Glycosyl hydrolase family 109 protein (459 aa).

A signal peptide (tat-type signal) is located at residues 1-31 (MHNIHRRNFLKAAGAATAGLVTANIALSAYA). Residues 64 to 65 (ER), Asp86, 135 to 138 (WEWH), 155 to 156 (EV), and Asn184 each bind NAD(+). Substrate is bound by residues Tyr213, Arg232, 244 to 247 (YPTH), and Tyr326. Tyr244 is an NAD(+) binding site.

It belongs to the Gfo/Idh/MocA family. Glycosyl hydrolase 109 subfamily. It depends on NAD(+) as a cofactor. Predicted to be exported by the Tat system. The position of the signal peptide cleavage has not been experimentally proven.

In terms of biological role, glycosidase. This is Glycosyl hydrolase family 109 protein from Shewanella baltica (strain OS185).